A 183-amino-acid polypeptide reads, in one-letter code: Putative manganese efflux pump MntP 1 (183 aa).

Helical transmembrane passes span 6 to 26 (LFLLALAISLDAFGVILCIGI), 36 to 56 (MIFVFSFGFFQFFLSFLGGYI), 64 to 84 (IVPIPTIVGGLIIIIVGILMI), 100 to 120 (IMYLILGVSVSIDALVIGFTT), 130 to 150 (LFMSSLFMGLIATIICSLGII), and 158 to 178 (ISIISSYADYIGGIILILFGL).

This sequence belongs to the MntP (TC 9.B.29) family.

Its subcellular location is the cell membrane. In terms of biological role, probably functions as a manganese efflux pump. The polypeptide is Putative manganese efflux pump MntP 1 (Clostridium botulinum (strain Hall / ATCC 3502 / NCTC 13319 / Type A)).